We begin with the raw amino-acid sequence, 539 residues long: MPENVAPRSGATAGAAGGRGKGAYQDRDKPAQIRFSNISAAKAVADAIRTSLGPKGMDKMIQDGKGDVTITNDGATILKQMQVLHPAARMLVELSKAQDIEAGDGTTSVVIIAGSLLDSCTKLLQKGIHPTIISESFQKALEKGIEILTDMSRPVELSDRETLLNSATTSLNSKVVSQYSSLLSPMSVNAVMKVIDPATATSVDLRDIKIVKKLGGTIDDCELVEGLVLTQKVSNSGITRVEKAKIGLIQFCLSAPKTDMDNQIVVSDYAQMDRVLREERAYILNLVKQIKKTGCNVLLIQKSILRDALSDLALHFLNKMKIMVIKDIEREDIEFICKTIGTKPVAHIDQFTADMLGSAELAEEVNLNGSGKLLKITGCASPGKTVTIVVRGSNKLVIEEAERSIHDALCVIRCLVKKRALIAGGGAPEIELALRLTEYSRTLSGMESYCVRAFADAMEVIPSTLAENAGLNPISTVTELRNRHAQGEKTAGINVRKGGISNILEELVVQPLLVSVSALTLATETVRSILKIDDVVNTR.

The interval 1 to 29 (MPENVAPRSGATAGAAGGRGKGAYQDRDK) is disordered. The residue at position 19 (R19) is an Omega-N-methylarginine. An N6-acetyllysine modification is found at K21. The residue at position 36 (S36) is a Phosphoserine. An ADP-binding site is contributed by G53. An ATP-binding site is contributed by G53. D104 provides a ligand contact to Mg(2+). Residues G105, T106, T107, S108, N172, S173, and K174 each contribute to the ADP site. Residues G105 and T106 each coordinate ATP. Residue K174 participates in ATP binding. Phosphoserine occurs at positions 184 and 202. N6-acetyllysine is present on residues K288, K302, K319, and K326. G425 provides a ligand contact to ADP. The residue at position 444 (S444) is a Phosphoserine. An ADP-binding site is contributed by Q510.

It belongs to the TCP-1 chaperonin family. As to quaternary structure, component of the chaperonin-containing T-complex (TRiC), a hexadecamer composed of two identical back-to-back stacked rings enclosing a protein folding chamber. Each ring is made up of eight different subunits: TCP1/CCT1, CCT2, CCT3, CCT4, CCT5, CCT6A/CCT6, CCT7, CCT8. Interacts with PACRG. Interacts with DNAAF4. Interacts with DLEC1.

The protein localises to the cytoplasm. It localises to the melanosome. Its subcellular location is the cytoskeleton. The protein resides in the microtubule organizing center. It is found in the centrosome. The protein localises to the cilium basal body. It catalyses the reaction ATP + H2O = ADP + phosphate + H(+). Functionally, component of the chaperonin-containing T-complex (TRiC), a molecular chaperone complex that assists the folding of actin, tubulin and other proteins upon ATP hydrolysis. The TRiC complex mediates the folding of WRAP53/TCAB1, thereby regulating telomere maintenance. As part of the TRiC complex may play a role in the assembly of BBSome, a complex involved in ciliogenesis regulating transports vesicles to the cilia. The chain is T-complex protein 1 subunit delta (CCT4) from Homo sapiens (Human).